A 201-amino-acid polypeptide reads, in one-letter code: IMP cyclohydrolase (201 aa).

The protein belongs to the archaeal IMP cyclohydrolase family.

It catalyses the reaction IMP + H2O = 5-formamido-1-(5-phospho-D-ribosyl)imidazole-4-carboxamide. It participates in purine metabolism; IMP biosynthesis via de novo pathway; IMP from 5-formamido-1-(5-phospho-D-ribosyl)imidazole-4-carboxamide: step 1/1. Functionally, catalyzes the cyclization of 5-formylamidoimidazole-4-carboxamide ribonucleotide to IMP. This Methanococcus maripaludis (strain C5 / ATCC BAA-1333) protein is IMP cyclohydrolase.